The sequence spans 146 residues: Hemoglobin subunit beta (146 aa).

Val-1 bears the N-acetylvaline mark. The region spanning 2–146 (HLTAEEKSAV…VANALAHKYH (145 aa)) is the Globin domain. Thr-12 bears the Phosphothreonine mark. Ser-44 carries the phosphoserine modification. An N6-acetyllysine modification is found at Lys-59. His-63 provides a ligand contact to heme b. Lys-82 is modified (N6-acetyllysine). His-92 is a binding site for heme b. The residue at position 93 (Cys-93) is an S-nitrosocysteine. Lys-144 carries the N6-acetyllysine modification.

It belongs to the globin family. In terms of assembly, heterotetramer of two alpha chains and two beta chains. As to expression, red blood cells.

Functionally, involved in oxygen transport from the lung to the various peripheral tissues. This Meles meles (Eurasian badger) protein is Hemoglobin subunit beta (HBB).